A 420-amino-acid chain; its full sequence is Adenylosuccinate synthetase (420 aa).

Residues 11 to 17 (GDEGKGK) and 39 to 41 (GHT) each bind GTP. Asp12 acts as the Proton acceptor in catalysis. Mg(2+) is bound by residues Asp12 and Gly39. IMP contacts are provided by residues 12–15 (DEGK), 37–40 (NAGH), Thr129, Arg143, Asn218, Thr233, and Arg297. Residue His40 is the Proton donor of the active site. 293-299 (VTTGRKR) contributes to the substrate binding site. GTP contacts are provided by residues Arg299, 325–327 (KLD), and 407–409 (GTG).

It belongs to the adenylosuccinate synthetase family. In terms of assembly, homodimer. Requires Mg(2+) as cofactor.

It is found in the cytoplasm. The catalysed reaction is IMP + L-aspartate + GTP = N(6)-(1,2-dicarboxyethyl)-AMP + GDP + phosphate + 2 H(+). The protein operates within purine metabolism; AMP biosynthesis via de novo pathway; AMP from IMP: step 1/2. In terms of biological role, plays an important role in the de novo pathway and in the salvage pathway of purine nucleotide biosynthesis. Catalyzes the first committed step in the biosynthesis of AMP from IMP. In Uncinocarpus reesii (strain UAMH 1704), this protein is Adenylosuccinate synthetase.